A 289-amino-acid chain; its full sequence is CRISPR-associated endoribonuclease Cas6 2 (289 aa).

The protein belongs to the CRISPR-associated endoribonuclease Cas6 family. In terms of assembly, possibly part of the aCascade ribonucleoprotein complex. Requires Mg(2+) as cofactor.

Functionally, CRISPR (clustered regularly interspaced short palindromic repeat) is an adaptive immune system that provides protection against mobile genetic elements (viruses, transposable elements and conjugative plasmids). CRISPR clusters contain sequences complementary to antecedent mobile elements and target invading nucleic acids. CRISPR clusters are transcribed and processed into CRISPR RNA (crRNA). Functions as a ssRNA-specific endoribonuclease, generating an 8 base-long tag known as the 5' handle. This chain is CRISPR-associated endoribonuclease Cas6 2 (cas6b), found in Saccharolobus solfataricus (strain ATCC 35092 / DSM 1617 / JCM 11322 / P2) (Sulfolobus solfataricus).